Here is a 460-residue protein sequence, read N- to C-terminus: Jacalin-related lectin 36 (460 aa).

The region spanning 1 to 131 is the Jacalin-type lectin 1 domain; it reads MAAATMSWDD…LNSIDVHFAP (131 aa). Residue Ala2 is modified to N-acetylalanine. Disordered regions lie at residues 34–57, 133–162, and 291–334; these read YDGD…VSLS, PSSS…WDDG, and SGRG…PHEG. The span at 133 to 143 shows a compositional bias: low complexity; it reads PSSSSSSSSLS. The 145-residue stretch at 145–289 folds into the Jacalin-type lectin 2 domain; sequence ANKVDAQGGK…LNALGAYFAP (145 aa). Residues 292–309 show a composition bias toward polar residues; it reads GRGTPSATQPPGSAQPTG. A Jacalin-type lectin 3 domain is found at 313 to 457; sequence AKKLEAKGGN…IHQVGVHVKP (145 aa).

The protein belongs to the jacalin lectin family.

This is Jacalin-related lectin 36 (JAL36) from Arabidopsis thaliana (Mouse-ear cress).